A 98-amino-acid polypeptide reads, in one-letter code: Protein S100-A13 (98 aa).

In terms of domain architecture, EF-hand spans 18–53 (TTFFTFARQEGRKDSLSVNEFKELVTQQLPHLLKDV). The Ca(2+) site is built by S32, E37, D64, N66, D68, E70, and E75. Residue S32 is modified to Phosphoserine.

This sequence belongs to the S-100 family. Homodimer. Part of a copper-dependent multiprotein complex containing S100A13, FGF1 and SYT1. Interacts with FGF1 and SYT1. Interacts with IL1A. In terms of tissue distribution, expressed in heart and skeletal muscle.

Its subcellular location is the cytoplasm. It is found in the secreted. Functionally, plays a role in the export of proteins that lack a signal peptide and are secreted by an alternative pathway. Binds two calcium ions per subunit. Binds one copper ion. Binding of one copper ion does not interfere with calcium binding. Required for the copper-dependent stress-induced export of IL1A and FGF1. The calcium-free protein binds to lipid vesicles containing phosphatidylserine, but not to vesicles containing phosphatidylcholine. The polypeptide is Protein S100-A13 (S100A13) (Homo sapiens (Human)).